We begin with the raw amino-acid sequence, 158 residues long: Hypoxanthine DNA glycosylase (158 aa).

N39 is an active-site residue.

It belongs to the uracil-DNA glycosylase (UDG) superfamily. Type 6 (HDG) family.

Excises hypoxanthine, a deamination product of adenine, from double-stranded DNA. Acts on double-stranded DNA containing G/I, T/I, A/I and C/I base pairs, but not on single-stranded inosine-containing DNA. Also has minor xanthine DNA glycosylase activity. Lacks any detectable uracil-DNA glycosylase activity. This is Hypoxanthine DNA glycosylase from Methanosarcina acetivorans (strain ATCC 35395 / DSM 2834 / JCM 12185 / C2A).